A 256-amino-acid polypeptide reads, in one-letter code: UPF0246 protein TERTU_4575 (256 aa).

Belongs to the UPF0246 family.

This Teredinibacter turnerae (strain ATCC 39867 / T7901) protein is UPF0246 protein TERTU_4575.